The chain runs to 564 residues: MFS-type efflux transporter ffsH (564 aa).

A compositionally biased stretch (basic and acidic residues) spans 1–18; sequence MSEAEKKASQDAQHKEPM. Positions 1–37 are disordered; that stretch reads MSEAEKKASQDAQHKEPMADSETQLDSDSAPSSQAEK. Over residues 21–35 the composition is skewed to polar residues; the sequence is SETQLDSDSAPSSQA. 4 helical membrane-spanning segments follow: residues 43 to 63, 98 to 118, 131 to 151, and 157 to 177; these read YPLS…ISAM, YVMI…GGAN, GIGA…LVPM, and FIGL…IIGG. N182 carries an N-linked (GlcNAc...) asparagine glycan. 9 consecutive transmembrane segments (helical) span residues 187-207, 226-246, 254-274, 300-320, 334-354, 362-382, 389-409, 427-447, and 502-522; these read WVFY…VLFL, VVGN…LTYG, AANI…FIAW, FFIS…YPVY, VHLL…GGLV, PIHM…SVLT, AWAV…STTL, TWAY…AAIF, and VWLV…FEKE. Residues 540–564 form a disordered region; it reads GDAKGDVERGEGQNDSREGGQNENV. Residue N553 is glycosylated (N-linked (GlcNAc...) asparagine).

Belongs to the major facilitator superfamily.

The protein localises to the cell membrane. MFS-type efflux transporter; part of the gene cluster that mediates the biosynthesis of the cytotoxic leucine-containing cytochalasans, including aspochalasin C, aspochalasin E, TMC-169, flavichalasine F, aspergillin PZ, aspochalasin M and flavichalasine G. FfsH might be involved in the excretion of cytochalasans. This chain is MFS-type efflux transporter ffsH, found in Aspergillus flavipes.